Consider the following 247-residue polypeptide: TLC domain-containing protein 1 (247 aa).

The first 27 residues, Met1–Cys27, serve as a signal peptide directing secretion. The Extracellular segment spans residues Arg28 to His46. Residues Leu40–Arg234 enclose the TLC domain. Residues Asn47–Trp67 form a helical membrane-spanning segment. Topologically, residues Gln68–Ser83 are cytoplasmic. The chain crosses the membrane as a helical span at residues Gly84–Val104. The Extracellular portion of the chain corresponds to Ser105–Gly123. The segment at residues Ala124–Val144 is an intramembrane region (helical). The Extracellular portion of the chain corresponds to Glu145 to Tyr173. Residues Ile174–Phe194 form a helical membrane-spanning segment. At Leu195–Arg201 the chain is on the cytoplasmic side. The chain crosses the membrane as a helical span at residues Thr202–Phe222. The Extracellular portion of the chain corresponds to Ser223–Glu247.

Its subcellular location is the cell membrane. Its function is as follows. Regulates the composition and fluidity of the plasma membrane. Inhibits the incorporation of membrane-fluidizing phospholipids containing omega-3 long-chain polyunsaturated fatty acids (LCPUFA) and thereby promotes membrane rigidity. Does not appear to have any effect on LCPUFA synthesis. The sequence is that of TLC domain-containing protein 1 (Tlcd1) from Mus musculus (Mouse).